We begin with the raw amino-acid sequence, 677 residues long: mRNA export factor Gle1 (677 aa).

The segment covering Glu-34–Pro-48 has biased composition (basic and acidic residues). 3 disordered regions span residues Glu-34 to Ile-65, Lys-113 to Gln-136, and Glu-294 to Thr-366. The span at Glu-49 to Glu-60 shows a compositional bias: pro residues. 2 coiled-coil regions span residues Glu-122 to His-179 and Gln-280 to Val-346. Basic and acidic residues predominate over residues Glu-294–Lys-340.

Belongs to the GLE1 family. In terms of assembly, may associate with the NPC.

Its subcellular location is the cytoplasm. It localises to the nucleus. The protein resides in the nuclear pore complex. Required for the export of mRNAs containing poly(A) tails from the nucleus into the cytoplasm. May be involved in the terminal step of the mRNA transport through the nuclear pore complex (NPC). This is mRNA export factor Gle1 from Drosophila melanogaster (Fruit fly).